A 68-amino-acid polypeptide reads, in one-letter code: Small ribosomal subunit protein bS21 (68 aa).

The tract at residues 39 to 68 (PPSVKRVRKKQESERRHRKERAMRRRMMEE) is disordered. Over residues 54-68 (RHRKERAMRRRMMEE) the composition is skewed to basic residues.

It belongs to the bacterial ribosomal protein bS21 family.

The chain is Small ribosomal subunit protein bS21 from Orientia tsutsugamushi (strain Ikeda) (Rickettsia tsutsugamushi).